The chain runs to 427 residues: Gamma-glutamyl phosphate reductase (427 aa).

Belongs to the gamma-glutamyl phosphate reductase family.

The protein localises to the cytoplasm. The enzyme catalyses L-glutamate 5-semialdehyde + phosphate + NADP(+) = L-glutamyl 5-phosphate + NADPH + H(+). It functions in the pathway amino-acid biosynthesis; L-proline biosynthesis; L-glutamate 5-semialdehyde from L-glutamate: step 2/2. In terms of biological role, catalyzes the NADPH-dependent reduction of L-glutamate 5-phosphate into L-glutamate 5-semialdehyde and phosphate. The product spontaneously undergoes cyclization to form 1-pyrroline-5-carboxylate. This is Gamma-glutamyl phosphate reductase from Brucella melitensis biotype 2 (strain ATCC 23457).